Consider the following 282-residue polypeptide: Parvulin-like PPIase (282 aa).

An N-terminal signal peptide occupies residues methionine 1–alanine 20. The PpiC domain occupies lysine 138 to glutamate 231.

It belongs to the PpiC/parvulin rotamase family.

The protein localises to the cell outer membrane. It catalyses the reaction [protein]-peptidylproline (omega=180) = [protein]-peptidylproline (omega=0). The chain is Parvulin-like PPIase (plp) from Rickettsia conorii (strain ATCC VR-613 / Malish 7).